The sequence spans 91 residues: Elongation factor 1-beta (91 aa).

Belongs to the EF-1-beta/EF-1-delta family.

Functionally, promotes the exchange of GDP for GTP in EF-1-alpha/GDP, thus allowing the regeneration of EF-1-alpha/GTP that could then be used to form the ternary complex EF-1-alpha/GTP/AAtRNA. The protein is Elongation factor 1-beta of Thermococcus onnurineus (strain NA1).